A 303-amino-acid polypeptide reads, in one-letter code: tRNA pseudouridine synthase-like 1 (303 aa).

The active-site Nucleophile is the D66. S84 is modified (phosphoserine). Substrate is bound at residue Y130.

The protein belongs to the tRNA pseudouridine synthase TruA family.

The enzyme catalyses a uridine in tRNA = a pseudouridine in tRNA. The sequence is that of tRNA pseudouridine synthase-like 1 (PUSL1) from Homo sapiens (Human).